Here is a 423-residue protein sequence, read N- to C-terminus: MFSKDLFQESKKFIPGGVSSPVRAFEPYPFFVKKASGSKIYDVDGNKYIDHCLAYGPLILGHADPKVVREVSNQLTIGSAYGTPTENEIILAKEVVDRIPSAEMVRFVNSGGEATMSAIRLARGFTGKDKIIKFDGAYHGAHDYTLVKGEPGKSCVPDTKGIPLDTAKNTYSVPFNDEEALSDLIQKDGDNIACLIMEVVMGNIGCIEPKKGFLEFVRKITEENNILLIFDEVITGFRLARGGAQEYYGVTPDLTTMGKIVGGGLPMGAFAGKKEIMELIAPNGPVYQAGTFSGNPISVQAGISTLKQLDNQFYKDLERKGNFLRSNIQSIIDEQGYNITPVGCGSMFQIYFNPAPVYNNDDAHNSDAKRFLRYFRALLKEGVFIPPSQFECNFISSAHSMEDLTQTAEAIEVALEVAFKKKG.

At Lys259 the chain carries N6-(pyridoxal phosphate)lysine.

The protein belongs to the class-III pyridoxal-phosphate-dependent aminotransferase family. HemL subfamily. It depends on pyridoxal 5'-phosphate as a cofactor.

It is found in the cytoplasm. The enzyme catalyses (S)-4-amino-5-oxopentanoate = 5-aminolevulinate. It functions in the pathway porphyrin-containing compound metabolism; protoporphyrin-IX biosynthesis; 5-aminolevulinate from L-glutamyl-tRNA(Glu): step 2/2. This is Glutamate-1-semialdehyde 2,1-aminomutase from Methanobrevibacter smithii (strain ATCC 35061 / DSM 861 / OCM 144 / PS).